The sequence spans 864 residues: Protein 4.1 (864 aa).

Composition is skewed to polar residues over residues 1 to 16 (MTTEKSLVTEAENSQH) and 27 to 41 (NSGQQEPQQEESCQT). Disordered stretches follow at residues 1 to 122 (MTTE…GTSL), 136 to 170 (EPELKTDPSLDLHSLSSAETQPAQEELREDPDFEI), and 182 to 202 (IEVKEESPQSKAETELKASQK). Ser14 carries the post-translational modification Phosphoserine. Phosphothreonine; by CDK1 is present on Thr60. Over residues 61 to 75 (PTHEDLTKNKERTSE) the composition is skewed to basic and acidic residues. Low complexity predominate over residues 76–87 (SRGLSRLFSSFL). Residues Ser84, Ser85, Ser95, Ser104, Ser121, Ser149, Ser151, Ser152, Ser188, and Ser191 each carry the phosphoserine modification. A compositionally biased stretch (basic and acidic residues) spans 101-117 (EVESDKEKGEGGQKEIE). The span at 149-158 (SLSSAETQPA) shows a compositional bias: polar residues. Basic and acidic residues predominate over residues 182–199 (IEVKEESPQSKAETELKA). Residues 210–491 (MHCKVSLLDD…EHHTFFRLTS (282 aa)) form the FERM domain. Tyr222 is modified (phosphotyrosine). Residue Thr378 is modified to Phosphothreonine. The tract at residues 494-614 (TIPKSKFLAL…QAEPEPTEAW (121 aa)) is hydrophilic. Disordered stretches follow at residues 518–572 (RQAS…VAEG) and 586–611 (KAQKETVKAEVKKEDEPPEQAEPEPT). Phosphoserine is present on residues Ser521, Ser540, Ser542, and Ser555. The segment covering 587-600 (AQKETVKAEVKKED) has biased composition (basic and acidic residues). Residues 601-610 (EPPEQAEPEP) are compositionally biased toward acidic residues. The tract at residues 615 to 713 (KVEKTHIEVT…WDKRLSTHSP (99 aa)) is spectrin--actin-binding. Tyr660 is modified (phosphotyrosine; by EGFR). Residues Ser664, Ser674, Ser684, and Ser709 each carry the phosphoserine modification. Ser712 carries the phosphoserine; by CDK1 modification. Residues 714–864 (FRTLNINGQI…VHQETEIADE (151 aa)) form a C-terminal (CTD) region. Residues Thr736 and Thr859 each carry the phosphothreonine modification.

As to quaternary structure, binds with a high affinity to glycophorin and with lower affinity to band III protein. Associates with the nuclear mitotic apparatus. Interacts with calmodulin. Interacts with CPAP. Interacts with DLG1. Also found to associate with contractile apparatus and tight junctions. Interacts with NUMA1; this interaction is negatively regulated by CDK1 during metaphase and promotes anaphase-specific localization of NUMA1 in symmetrically dividing cells. Interacts with ATP2B1; regulates small intestinal calcium absorption through regulation of membrane expression of ATP2B1. Phosphorylated at multiple sites by different protein kinases and each phosphorylation event selectively modulates the protein's functions. In terms of processing, phosphorylation on Tyr-660 reduces the ability of 4.1 to promote the assembly of the spectrin/actin/4.1 ternary complex. Post-translationally, O-glycosylated; contains N-acetylglucosamine side chains in the C-terminal domain.

The protein localises to the cytoplasm. Its subcellular location is the cytoskeleton. It is found in the cell cortex. The protein resides in the nucleus. Protein 4.1 is a major structural element of the erythrocyte membrane skeleton. It plays a key role in regulating membrane physical properties of mechanical stability and deformability by stabilizing spectrin-actin interaction. Recruits DLG1 to membranes. Required for dynein-dynactin complex and NUMA1 recruitment at the mitotic cell cortex during anaphase. In Homo sapiens (Human), this protein is Protein 4.1.